The chain runs to 188 residues: Tuftelin (188 aa).

Positions 1-181 (SLRKTVQDLL…DRMEHLIEKQ (181 aa)) form a coiled coil.

It belongs to the tuftelin family. In terms of assembly, interacts with TFIP11.

It localises to the secreted. In terms of biological role, involved in the structural organization of the epidermis. Involved in the mineralization and structural organization of enamel. This Sus scrofa (Pig) protein is Tuftelin (TUFT1).